The following is a 420-amino-acid chain: uncharacterized protein (420 aa).

A signal peptide spans 1–25 (MRYAMNKIPALLLVGALIIATVASG). Position 26 is an N-acetylcysteine (cysteine 26). Cysteine 26 carries the S-archaeol cysteine lipid modification.

This sequence belongs to the bacterial solute-binding protein 1 family.

The protein localises to the cell membrane. Its function is as follows. Probably part of a binding-protein-dependent transport system PH1036/38/39. This is an uncharacterized protein from Pyrococcus horikoshii (strain ATCC 700860 / DSM 12428 / JCM 9974 / NBRC 100139 / OT-3).